A 513-amino-acid polypeptide reads, in one-letter code: Maturase K (513 aa).

This sequence belongs to the intron maturase 2 family. MatK subfamily.

It is found in the plastid. Its subcellular location is the chloroplast. Usually encoded in the trnK tRNA gene intron. Probably assists in splicing its own and other chloroplast group II introns. The chain is Maturase K from Sporobolus indicus (Smut grass).